The sequence spans 295 residues: Light-independent protochlorophyllide reductase iron-sulfur ATP-binding protein (295 aa).

Residues 39–44 (GIGKST) and Lys-68 contribute to the ATP site. Residue Ser-43 coordinates Mg(2+). Residues Cys-124 and Cys-158 each coordinate [4Fe-4S] cluster. 209–210 (NR) is a binding site for ATP.

It belongs to the NifH/BchL/ChlL family. In terms of assembly, homodimer. Protochlorophyllide reductase is composed of three subunits; ChlL, ChlN and ChlB. It depends on [4Fe-4S] cluster as a cofactor.

The enzyme catalyses chlorophyllide a + oxidized 2[4Fe-4S]-[ferredoxin] + 2 ADP + 2 phosphate = protochlorophyllide a + reduced 2[4Fe-4S]-[ferredoxin] + 2 ATP + 2 H2O. It functions in the pathway porphyrin-containing compound metabolism; chlorophyll biosynthesis (light-independent). In terms of biological role, component of the dark-operative protochlorophyllide reductase (DPOR) that uses Mg-ATP and reduced ferredoxin to reduce ring D of protochlorophyllide (Pchlide) to form chlorophyllide a (Chlide). This reaction is light-independent. The L component serves as a unique electron donor to the NB-component of the complex, and binds Mg-ATP. This Prochlorococcus marinus (strain AS9601) protein is Light-independent protochlorophyllide reductase iron-sulfur ATP-binding protein.